Here is a 976-residue protein sequence, read N- to C-terminus: Apical junction component 1 homolog (976 aa).

The tract at residues Ala-21 to His-49 is disordered. Position 52 is a phosphoserine (Ser-52). 3 disordered regions span residues Gly-61–Tyr-136, Pro-220–Ser-242, and Tyr-264–Phe-294. The segment covering Arg-98 to Leu-113 has biased composition (pro residues). Residues Arg-116–Pro-134 are compositionally biased toward basic and acidic residues. Residue Ser-129 is modified to Phosphoserine. Arg-322 carries the post-translational modification Omega-N-methylarginine. The disordered stretch occupies residues Leu-412 to Arg-443. Residues Ser-468, Ser-509, and Ser-512 each carry the phosphoserine modification. Disordered stretches follow at residues Asp-539–Gln-574 and Leu-614–Asp-660. Low complexity-rich tracts occupy residues Ser-616–Ala-625 and Pro-633–Pro-655. Asymmetric dimethylarginine; alternate is present on Arg-749. Arg-749 carries the post-translational modification Omega-N-methylarginine; alternate. Positions Gly-855–Gly-888 are disordered.

It is found in the apical cell membrane. The protein localises to the cell projection. The protein resides in the cilium. Its subcellular location is the cell junction. It localises to the adherens junction. May be involved in the control of adherens junction integrity. This chain is Apical junction component 1 homolog, found in Homo sapiens (Human).